The primary structure comprises 133 residues: MDTKKKSKEHGLYRIVNAIGYAFGAGAVGGSVYHFVRGAYNSPIGARYVGGTQAASMNAPRLGGTFAVFGGLLSTFDYALVRIRKKEDPWNSIVAGAATGGVLSIRKGVVAASTSAVMFGFFLAVLNPPFGSK.

4 helical membrane passes run 15 to 35 (IVNAIGYAFGAGAVGGSVYHF), 63 to 83 (GGTFAVFGGLLSTFDYALVRI), 90 to 105 (WNSIVAGAATGGVLSI), and 115 to 128 (SAVMFGFFLAVLNP).

This sequence belongs to the Tim17/Tim22/Tim23 family. As to quaternary structure, component of the TIM17:23 complex at least composed of TIM23, TIM17 and TIM50. The complex interacts with the TIM44 component of the PAM complex. In terms of tissue distribution, expressed in cotyledons, roots, flowers and leaves.

It localises to the mitochondrion inner membrane. Essential component of the TIM17:23 complex, a complex that mediates the translocation of transit peptide-containing proteins across the mitochondrial inner membrane. Links the inner and outer membranes. In Arabidopsis thaliana (Mouse-ear cress), this protein is Mitochondrial import inner membrane translocase subunit TIM17-3 (TIM17-3).